The primary structure comprises 1212 residues: Probable serine/threonine-protein kinase DDB_G0284491 (1212 aa).

Residues 197-217 (LFHSFSLLNLYVYLIIVIRII) traverse the membrane as a helical segment. 14 N-linked (GlcNAc...) asparagine glycosylation sites follow: Asn-229, Asn-299, Asn-309, Asn-328, Asn-335, Asn-341, Asn-344, Asn-391, Asn-419, Asn-422, Asn-426, Asn-427, Asn-435, and Asn-499. Positions 288-329 (LNNNNDNNLNNNNSNNNLNNNNNSNSNFNNDNNLNSNINSND) are disordered. 2 disordered regions span residues 412 to 439 (GNSN…NSGG) and 489 to 517 (IIKN…DYEE). Positions 489–507 (IIKNNNNNNNNNSNNNNNN) are enriched in low complexity. Positions 508–517 (NDEDDSDYEE) are enriched in acidic residues. The chain crosses the membrane as a helical span at residues 673–693 (IQIFDDYSLIIALRLLMNFIL). Residues 703–720 (VPPPPTQPSSRPQSPPTV) are compositionally biased toward pro residues. 2 disordered regions span residues 703-733 (VPPP…HHSG) and 751-813 (EVVS…NNNN). One can recognise a Protein kinase domain in the interval 865-1182 (ETEIEPFASG…EVYNDLQDIY (318 aa)). Residues 871–879 (FASGGQANI) and Lys-924 contribute to the ATP site. Asp-1035 serves as the catalytic Proton acceptor.

It belongs to the protein kinase superfamily. Ser/Thr protein kinase family.

The protein localises to the membrane. The enzyme catalyses L-seryl-[protein] + ATP = O-phospho-L-seryl-[protein] + ADP + H(+). It catalyses the reaction L-threonyl-[protein] + ATP = O-phospho-L-threonyl-[protein] + ADP + H(+). This Dictyostelium discoideum (Social amoeba) protein is Probable serine/threonine-protein kinase DDB_G0284491.